Consider the following 89-residue polypeptide: Large ribosomal subunit protein eL34 (89 aa).

Belongs to the eukaryotic ribosomal protein eL34 family.

This is Large ribosomal subunit protein eL34 (rpl34e) from Methanocaldococcus jannaschii (strain ATCC 43067 / DSM 2661 / JAL-1 / JCM 10045 / NBRC 100440) (Methanococcus jannaschii).